The chain runs to 192 residues: Peptidyl-tRNA hydrolase (192 aa).

The Proton acceptor role is filled by histidine 19. Tyrosine 64, asparagine 66, and asparagine 112 together coordinate tRNA.

This sequence belongs to the PTH family. Monomer.

The protein localises to the cytoplasm. It carries out the reaction an N-acyl-L-alpha-aminoacyl-tRNA + H2O = an N-acyl-L-amino acid + a tRNA + H(+). Functionally, hydrolyzes ribosome-free peptidyl-tRNAs (with 1 or more amino acids incorporated), which drop off the ribosome during protein synthesis, or as a result of ribosome stalling. Its function is as follows. Catalyzes the release of premature peptidyl moieties from peptidyl-tRNA molecules trapped in stalled 50S ribosomal subunits, and thus maintains levels of free tRNAs and 50S ribosomes. This chain is Peptidyl-tRNA hydrolase, found in Acidiphilium cryptum (strain JF-5).